Reading from the N-terminus, the 308-residue chain is Olfactory receptor 8D1 (308 aa).

The Extracellular portion of the chain corresponds to 1–25; that stretch reads MTMENYSMAAQFVLDGLTQQAELQL. N-linked (GlcNAc...) asparagine glycosylation is present at Asn-5. The helical transmembrane segment at 26–46 threads the bilayer; it reads PLFLLFLGIYVVTVVGNLGMI. Topologically, residues 47-54 are cytoplasmic; sequence LLIAVSPL. The chain crosses the membrane as a helical span at residues 55 to 75; sequence LHTPMYYFLSSLSFVDFCYSS. The Extracellular portion of the chain corresponds to 76-99; the sequence is VITPKMLVNFLGKKNTILYSECMV. Cys-97 and Cys-189 form a disulfide bridge. Residues 100 to 120 traverse the membrane as a helical segment; sequence QLFFFVVFVVAEGYLLTAMAY. At 121-139 the chain is on the cytoplasmic side; the sequence is DRYVAICSPLLYNAIMSSW. The chain crosses the membrane as a helical span at residues 140 to 160; that stretch reads VCSLLVLAAFFLGFLSALTHT. Topologically, residues 161-197 are extracellular; the sequence is SAMMKLSFCKSHIINHYFCDVLPLLNLSCSNTHLNEL. N-linked (GlcNAc...) asparagine glycosylation occurs at Asn-186. A helical membrane pass occupies residues 198–217; sequence LLFIIAGFNTLVPTLAVAVS. The Cytoplasmic portion of the chain corresponds to 218–237; sequence YAFILYSILHIRSSEGRSKA. The chain crosses the membrane as a helical span at residues 238–258; it reads FGTCSSHLMAVVIFFGSITFM. The Extracellular portion of the chain corresponds to 259–271; the sequence is YFKPPSSNSLDQE. A helical membrane pass occupies residues 272 to 292; it reads KVSSVFYTTVIPMLNPLIYSL. At 293-308 the chain is on the cytoplasmic side; the sequence is RNKDVKKALRKVLVGK.

This sequence belongs to the G-protein coupled receptor 1 family. Expressed in the tongue.

It is found in the cell membrane. Its function is as follows. Odorant receptor (Potential). May be involved in taste perception. This is Olfactory receptor 8D1 (OR8D1) from Homo sapiens (Human).